The chain runs to 180 residues: uncharacterized protein (180 aa).

The span at 114 to 136 (DKISESDSLPDEYKEYVVKHDSD) shows a compositional bias: basic and acidic residues. The tract at residues 114–180 (DKISESDSLP…NFDNPDDNPK (67 aa)) is disordered. A compositionally biased stretch (acidic residues) spans 137–146 (NSDNDSDNSD). The span at 147–173 (NDSNNSDNDSNNSDSDSDNSNDPNNFD) shows a compositional bias: low complexity.

This is an uncharacterized protein from Acanthamoeba polyphaga (Amoeba).